The following is a 244-amino-acid chain: Probable cytokinin riboside 5'-monophosphate phosphoribohydrolase LOGL2 (244 aa).

Residues Glu-91, 109-110 (RK), and 126-132 (GYGTLEE) each bind substrate.

Belongs to the LOG family.

The catalysed reaction is N(6)-(dimethylallyl)adenosine 5'-phosphate + H2O = N(6)-dimethylallyladenine + D-ribose 5-phosphate. It carries out the reaction 9-ribosyl-trans-zeatin 5'-phosphate + H2O = trans-zeatin + D-ribose 5-phosphate. In terms of biological role, cytokinin-activating enzyme working in the direct activation pathway. Phosphoribohydrolase that converts inactive cytokinin nucleotides to the biologically active free-base forms. The chain is Probable cytokinin riboside 5'-monophosphate phosphoribohydrolase LOGL2 (LOGL2) from Oryza sativa subsp. japonica (Rice).